The sequence spans 267 residues: Probable membrane transporter protein MJ0441 (267 aa).

A run of 7 helical transmembrane segments spans residues 10–30 (LLLL…GSLF), 31–51 (GIGG…YFGI), 55–75 (VKFA…ISIF), 87–107 (ASIT…FLVV), 158–178 (FLSG…LAMA), 185–205 (AVAI…ISYL), and 213–233 (IYNI…PIIY).

It belongs to the 4-toluene sulfonate uptake permease (TSUP) (TC 2.A.102) family.

Its subcellular location is the cell membrane. This chain is Probable membrane transporter protein MJ0441, found in Methanocaldococcus jannaschii (strain ATCC 43067 / DSM 2661 / JAL-1 / JCM 10045 / NBRC 100440) (Methanococcus jannaschii).